Reading from the N-terminus, the 188-residue chain is MAAQVTTSTDKVLRQPILGSRRFSNMLWASVSAIGGIGFLLAGLSSYFHKNLLGVSDPSNIQFIPQGAALTFYGVAGTLLSAYLWFVFFLDVGGGYNEFNKETGKVTIFRNGFVGKNRIINFQYPLKDILSIRAEIKEGLNPRRVLYLRVKNRGDIPLNRVGEPIPLAELENQGAELARFLTIPLEGL.

A run of 2 helical transmembrane segments spans residues 26–48 (MLWA…SSYF) and 68–90 (AALT…VFFL).

The protein belongs to the Ycf4 family.

Its subcellular location is the cellular thylakoid membrane. Seems to be required for the assembly of the photosystem I complex. This Picosynechococcus sp. (strain ATCC 27264 / PCC 7002 / PR-6) (Agmenellum quadruplicatum) protein is Photosystem I assembly protein Ycf4.